The chain runs to 64 residues: Frontoxin V (64 aa).

5 disulfides stabilise this stretch: Cys3-Cys24, Cys6-Cys11, Cys17-Cys41, Cys45-Cys57, and Cys58-Cys63.

As to expression, expressed by the venom gland.

The protein resides in the secreted. Produces peripheral paralysis by blocking neuromuscular transmission at the postsynaptic site. Binds to the muscular nicotinic acetylcholine receptor (nAChR). This Micrurus frontalis (Coral snake) protein is Frontoxin V.